The primary structure comprises 240 residues: Phosphatidylserine decarboxylase proenzyme (240 aa).

The Schiff-base intermediate with substrate; via pyruvic acid role is filled by Ser-198. Position 198 is a pyruvic acid (Ser); by autocatalysis (Ser-198).

This sequence belongs to the phosphatidylserine decarboxylase family. PSD-A subfamily. As to quaternary structure, heterodimer of a large membrane-associated beta subunit and a small pyruvoyl-containing alpha subunit. Pyruvate serves as cofactor. Is synthesized initially as an inactive proenzyme. Formation of the active enzyme involves a self-maturation process in which the active site pyruvoyl group is generated from an internal serine residue via an autocatalytic post-translational modification. Two non-identical subunits are generated from the proenzyme in this reaction, and the pyruvate is formed at the N-terminus of the alpha chain, which is derived from the carboxyl end of the proenzyme. The post-translation cleavage follows an unusual pathway, termed non-hydrolytic serinolysis, in which the side chain hydroxyl group of the serine supplies its oxygen atom to form the C-terminus of the beta chain, while the remainder of the serine residue undergoes an oxidative deamination to produce ammonia and the pyruvoyl prosthetic group on the alpha chain.

The protein localises to the cell membrane. It carries out the reaction a 1,2-diacyl-sn-glycero-3-phospho-L-serine + H(+) = a 1,2-diacyl-sn-glycero-3-phosphoethanolamine + CO2. Its pathway is phospholipid metabolism; phosphatidylethanolamine biosynthesis; phosphatidylethanolamine from CDP-diacylglycerol: step 2/2. In terms of biological role, catalyzes the formation of phosphatidylethanolamine (PtdEtn) from phosphatidylserine (PtdSer). This chain is Phosphatidylserine decarboxylase proenzyme, found in Paramagnetospirillum magneticum (strain ATCC 700264 / AMB-1) (Magnetospirillum magneticum).